Consider the following 361-residue polypeptide: Ribosomal RNA small subunit methyltransferase H (361 aa).

Residues 54 to 56, aspartate 74, tyrosine 101, aspartate 122, and glutamine 129 each bind S-adenosyl-L-methionine; that span reads GGH. Residues 318–361 are disordered; the sequence is ARNSRASSAKLRAAQRLAEGQAPRPRRRNKYAPEGRDEPEGGAA. Basic and acidic residues predominate over residues 348–361; that stretch reads YAPEGRDEPEGGAA.

The protein belongs to the methyltransferase superfamily. RsmH family.

Its subcellular location is the cytoplasm. It carries out the reaction cytidine(1402) in 16S rRNA + S-adenosyl-L-methionine = N(4)-methylcytidine(1402) in 16S rRNA + S-adenosyl-L-homocysteine + H(+). Specifically methylates the N4 position of cytidine in position 1402 (C1402) of 16S rRNA. This Nitratidesulfovibrio vulgaris (strain DSM 19637 / Miyazaki F) (Desulfovibrio vulgaris) protein is Ribosomal RNA small subunit methyltransferase H.